Reading from the N-terminus, the 145-residue chain is UPF0179 protein MmarC6_0993 (145 aa).

This sequence belongs to the UPF0179 family.

This is UPF0179 protein MmarC6_0993 from Methanococcus maripaludis (strain C6 / ATCC BAA-1332).